The chain runs to 885 residues: Chromatin structure-remodeling complex protein RSC3 (885 aa).

The segment at residues 14-42 (CVQCRKRKIGCDRVKPICGNCMKHNKMDC) is a DNA-binding region (zn(2)-C6 fungal-type). Phosphoserine is present on residues Ser-95 and Ser-236.

As to quaternary structure, forms a heteromer with RSC30. Interacts with LDB7 and NPL6. Component of the two forms of the RSC complex composed of at least either RSC1 or RSC2, and ARP7, ARP9, LDB7, NPL6, RSC3, RSC30, RSC4, RSC58, RSC6, RSC8, RSC9, SFH1, STH1, HTL1 and probably RTT102. The complexes interact with histone and histone variant components of centromeric chromatin. Component of a fungal-specific module (HTL1-LDB7-NPL6-RSC3-RSC30) within the RSC complex.

It is found in the nucleus. Its function is as follows. Component of the chromatin structure-remodeling complex (RSC), which is involved in transcription regulation and nucleosome positioning. RSC is responsible for the transfer of a histone octamer from a nucleosome core particle to naked DNA. The reaction requires ATP and involves an activated RSC-nucleosome intermediate. Remodeling reaction also involves DNA translocation, DNA twist and conformational change. As a reconfigurer of centromeric and flanking nucleosomes, RSC complex is required both for proper kinetochore function in chromosome segregation and, via a PKC1-dependent signaling pathway, for organization of the cellular cytoskeleton. This subunit is required for transcription of ribosomal protein genes and genes involved in the integrity of the cell wall, and also for proper metaphase progression. Together with HTL1, LDB7, NPL6, RSC30 components, defines a fungal-specific module within the RSC complex that plays a role in many cellular functions including the maintenance of cell wall integrity. The sequence is that of Chromatin structure-remodeling complex protein RSC3 (RSC3) from Saccharomyces cerevisiae (strain ATCC 204508 / S288c) (Baker's yeast).